Consider the following 156-residue polypeptide: MNMNATILGQAIAFILFVWFCMKYVWPPLMAAIEKRQKEIADGLASAERAKKDLDLAQANATDQLKKAKAEAQVIIEQANKRRSQILDEAKAEAEQERTKIVAQAQAEIDAERKRAREELRKQVAILAVAGAEKIIERSVDEAANSDIVDKLVAEL.

The chain crosses the membrane as a helical span at residues 11-31 (AIAFILFVWFCMKYVWPPLMA).

The protein belongs to the ATPase B chain family. F-type ATPases have 2 components, F(1) - the catalytic core - and F(0) - the membrane proton channel. F(1) has five subunits: alpha(3), beta(3), gamma(1), delta(1), epsilon(1). F(0) has three main subunits: a(1), b(2) and c(10-14). The alpha and beta chains form an alternating ring which encloses part of the gamma chain. F(1) is attached to F(0) by a central stalk formed by the gamma and epsilon chains, while a peripheral stalk is formed by the delta and b chains.

The protein resides in the cell inner membrane. F(1)F(0) ATP synthase produces ATP from ADP in the presence of a proton or sodium gradient. F-type ATPases consist of two structural domains, F(1) containing the extramembraneous catalytic core and F(0) containing the membrane proton channel, linked together by a central stalk and a peripheral stalk. During catalysis, ATP synthesis in the catalytic domain of F(1) is coupled via a rotary mechanism of the central stalk subunits to proton translocation. In terms of biological role, component of the F(0) channel, it forms part of the peripheral stalk, linking F(1) to F(0). This chain is ATP synthase subunit b, found in Enterobacter sp. (strain 638).